The chain runs to 126 residues: Large ribosomal subunit protein bL12 (126 aa).

It belongs to the bacterial ribosomal protein bL12 family. In terms of assembly, homodimer. Part of the ribosomal stalk of the 50S ribosomal subunit. Forms a multimeric L10(L12)X complex, where L10 forms an elongated spine to which 2 to 4 L12 dimers bind in a sequential fashion. Binds GTP-bound translation factors.

In terms of biological role, forms part of the ribosomal stalk which helps the ribosome interact with GTP-bound translation factors. Is thus essential for accurate translation. This is Large ribosomal subunit protein bL12 from Tropheryma whipplei (strain TW08/27) (Whipple's bacillus).